The primary structure comprises 543 residues: Sensor histidine kinase DcuS (543 aa).

The Cytoplasmic segment spans residues Met-1–Thr-20. Residues Val-21 to Phe-41 traverse the membrane as a helical segment. The Periplasmic portion of the chain corresponds to Ser-42–Trp-181. Residues Arg-107–His-110, Lys-121, Gly-140–Leu-142, and Arg-147 contribute to the (R)-malate site. A helical transmembrane segment spans residues Ser-182–Val-202. The Cytoplasmic segment spans residues Asn-203–Arg-543. A PAS domain is found at Leu-212–Asp-323. In terms of domain architecture, Histidine kinase spans Glu-346–Gly-538. His-349 is subject to Phosphohistidine; by autocatalysis.

In terms of assembly, homodimer. Autophosphorylated. The phosphoryl group is rapidly transferred to DcuR.

The protein localises to the cell inner membrane. It catalyses the reaction ATP + protein L-histidine = ADP + protein N-phospho-L-histidine.. In terms of biological role, member of the two-component regulatory system DcuR/DcuS. Involved in the C4-dicarboxylate-stimulated regulation of the genes encoding the anaerobic fumarate respiratory system (frdABCD; nuoAN; dcuB; sdhCDAB; etc.). Weakly regulates the aerobic C4-dicarboxylate transporter dctA. Activates DcuR by phosphorylation. The protein is Sensor histidine kinase DcuS (dcuS) of Escherichia coli O6:H1 (strain CFT073 / ATCC 700928 / UPEC).